We begin with the raw amino-acid sequence, 300 residues long: Large ribosomal subunit protein uL18 (300 aa).

Positions 246 to 267 are enriched in basic and acidic residues; the sequence is NIRSDPKRDRKPKKDVSKEPKR. The segment at 246–276 is disordered; the sequence is NIRSDPKRDRKPKKDVSKEPKRWNAKKLTNA.

This sequence belongs to the universal ribosomal protein uL18 family. As to quaternary structure, component of the large ribosomal subunit (LSU).

The protein resides in the cytoplasm. It localises to the nucleus. Its function is as follows. Component of the ribosome, a large ribonucleoprotein complex responsible for the synthesis of proteins in the cell. The small ribosomal subunit (SSU) binds messenger RNAs (mRNAs) and translates the encoded message by selecting cognate aminoacyl-transfer RNA (tRNA) molecules. The large subunit (LSU) contains the ribosomal catalytic site termed the peptidyl transferase center (PTC), which catalyzes the formation of peptide bonds, thereby polymerizing the amino acids delivered by tRNAs into a polypeptide chain. The nascent polypeptides leave the ribosome through a tunnel in the LSU and interact with protein factors that function in enzymatic processing, targeting, and the membrane insertion of nascent chains at the exit of the ribosomal tunnel. This chain is Large ribosomal subunit protein uL18 (RpL5), found in Toxoptera citricida (Brown citrus aphid).